Reading from the N-terminus, the 334-residue chain is Kihadalactone A synthase LFS (334 aa).

Residues 181-286 (KTASYSNMFH…RYSTGLFLCP (106 aa)) enclose the Fe2OG dioxygenase domain. Positions 208, 210, and 269 each coordinate Fe cation. R277 serves as a coordination point for 2-oxoglutarate.

It belongs to the iron/ascorbate-dependent oxidoreductase family. It depends on Fe(2+) as a cofactor. In terms of tissue distribution, expressed in maturing fruits and in juice vesicles.

The catalysed reaction is (1R,2R,3S,8R,10R,11R,15S,16S)-3-(acetyloxy)-15-(1-hydroxy-4-oxobutan-2-yl)-2,7,7,11,16-pentamethyl-5-oxo-6-oxatetracyclo[9.7.0.0(2,8).0(12,16)]octadec-12-en-10-yl acetate + 2-oxoglutarate + O2 = kihadalactone A + succinate + CO2 + 2 H2O. The protein operates within secondary metabolite biosynthesis; terpenoid biosynthesis. 2-oxoglutarate-Fe(II) type oxidoreductase involved in the biosynthesis of limonoids triterpene natural products such as limonin, a compound with insecticidal activity responsible for the bitter taste in citrus. Catalyzes the formation of kihadalactone A. In Citrus sinensis (Sweet orange), this protein is Kihadalactone A synthase LFS.